A 65-amino-acid chain; its full sequence is Large ribosomal subunit protein bL35 (65 aa).

It belongs to the bacterial ribosomal protein bL35 family.

The chain is Large ribosomal subunit protein bL35 from Pectobacterium atrosepticum (strain SCRI 1043 / ATCC BAA-672) (Erwinia carotovora subsp. atroseptica).